The chain runs to 64 residues: Large ribosomal subunit protein bL35 (64 aa).

The protein belongs to the bacterial ribosomal protein bL35 family.

This chain is Large ribosomal subunit protein bL35, found in Pelodictyon phaeoclathratiforme (strain DSM 5477 / BU-1).